The following is a 195-amino-acid chain: MALITDTNRAPAIAPQPKGIIDPNTGRPIGADDPTFLSISDELADRGFLLTTTDELINWARTGSLMWMTFGLACCAVEMMQMSMPRYDCERFGFAPRGSPRQSDVMIVAGTLTNKMAPALRKVYDQMPEPRYVISMGSCANGGGYYHYSYSVVRGCDRVVPVDIYVPGCPPTAEALLYGVLLLQKKIRRTGTIER.

[4Fe-4S] cluster is bound by residues Cys-74, Cys-75, Cys-139, and Cys-169.

It belongs to the complex I 20 kDa subunit family. NDH-1 is composed of 14 different subunits. Subunits NuoB, C, D, E, F, and G constitute the peripheral sector of the complex. The cofactor is [4Fe-4S] cluster.

Its subcellular location is the cell inner membrane. It catalyses the reaction a quinone + NADH + 5 H(+)(in) = a quinol + NAD(+) + 4 H(+)(out). NDH-1 shuttles electrons from NADH, via FMN and iron-sulfur (Fe-S) centers, to quinones in the respiratory chain. The immediate electron acceptor for the enzyme in this species is believed to be ubiquinone. Couples the redox reaction to proton translocation (for every two electrons transferred, four hydrogen ions are translocated across the cytoplasmic membrane), and thus conserves the redox energy in a proton gradient. In Methylobacterium radiotolerans (strain ATCC 27329 / DSM 1819 / JCM 2831 / NBRC 15690 / NCIMB 10815 / 0-1), this protein is NADH-quinone oxidoreductase subunit B.